The primary structure comprises 42 residues: Photosystem I reaction center subunit IX (42 aa).

A helical transmembrane segment spans residues 7–27 (YLSVAPVLSTLWFVALAGLLI).

Belongs to the PsaJ family.

It localises to the plastid. The protein resides in the chloroplast thylakoid membrane. Its function is as follows. May help in the organization of the PsaE and PsaF subunits. This chain is Photosystem I reaction center subunit IX, found in Atropa belladonna (Belladonna).